A 635-amino-acid chain; its full sequence is Threonine--tRNA ligase (635 aa).

The TGS domain maps to 1-61; it reads MISIRLKDGS…KEDGCLELLD (61 aa). The segment at 242–532 is catalytic; the sequence is DHRRLGRELG…LTEHFGGAFP (291 aa). Residues cysteine 333, histidine 384, and histidine 509 each contribute to the Zn(2+) site.

This sequence belongs to the class-II aminoacyl-tRNA synthetase family. Homodimer. Requires Zn(2+) as cofactor.

It localises to the cytoplasm. It catalyses the reaction tRNA(Thr) + L-threonine + ATP = L-threonyl-tRNA(Thr) + AMP + diphosphate + H(+). Catalyzes the attachment of threonine to tRNA(Thr) in a two-step reaction: L-threonine is first activated by ATP to form Thr-AMP and then transferred to the acceptor end of tRNA(Thr). Also edits incorrectly charged L-seryl-tRNA(Thr). This is Threonine--tRNA ligase from Syntrophomonas wolfei subsp. wolfei (strain DSM 2245B / Goettingen).